The sequence spans 325 residues: Mitochondrial amidoxime-reducing component 1 (325 aa).

Topologically, residues 1 to 16 (MDLKEAFATIFDQNRK) are mitochondrial matrix. The chain crosses the membrane as a helical; Signal-anchor for type II membrane protein span at residues 17–36 (VALYAAGTTVAVLGLGLVFK). Topologically, residues 37 to 325 (YMRREEKLTR…VGEPVYKITY (289 aa)) are cytoplasmic. Mo-molybdopterin is bound by residues K59, S60, and R84. Residues 85–175 (HWLVITEDGH…ADKPVRLVHY (91 aa)) are MOSC N-terminal region. In terms of domain architecture, MOSC spans 179 to 323 (LKPQRPHEKE…LHVGEPVYKI (145 aa)). Mo-molybdopterin is bound by residues R230, R264, C265, and Y305.

Requires Mo-molybdopterin as cofactor.

It is found in the mitochondrion outer membrane. Its subcellular location is the membrane. The catalysed reaction is N(omega)-hydroxy-L-arginine + 2 Fe(II)-[cytochrome b5] + 2 H(+) = L-arginine + 2 Fe(III)-[cytochrome b5] + H2O. Functionally, catalyzes the reduction of N-oxygenated molecules, acting as a counterpart of cytochrome P450 and flavin-containing monooxygenases in metabolic cycles. As a component of prodrug-converting system, reduces a multitude of N-hydroxylated prodrugs particularly amidoximes, leading to increased drug bioavailability. May be involved in mitochondrial N(omega)-hydroxy-L-arginine (NOHA) reduction, regulating endogenous nitric oxide levels and biosynthesis. Postulated to cleave the N-OH bond of N-hydroxylated substrates in concert with electron transfer from NADH to cytochrome b5 reductase then to cytochrome b5, the ultimate electron donor that primes the active site for substrate reduction. The sequence is that of Mitochondrial amidoxime-reducing component 1 (mtarc1) from Danio rerio (Zebrafish).